A 255-amino-acid polypeptide reads, in one-letter code: tRNA (guanine-N(7)-)-methyltransferase (255 aa).

Residues 1-30 form a disordered region; the sequence is MMHDDPNEAGLPPDDAALPDEAADGADEVN. Residues 17-27 are compositionally biased toward acidic residues; the sequence is ALPDEAADGAD. Residues Glu-86, Glu-111, Asp-138, and Asp-161 each coordinate S-adenosyl-L-methionine. Residue Asp-161 is part of the active site. Substrate contacts are provided by residues Lys-165, Asp-197, and 232–235; that span reads TKFE.

The protein belongs to the class I-like SAM-binding methyltransferase superfamily. TrmB family.

The enzyme catalyses guanosine(46) in tRNA + S-adenosyl-L-methionine = N(7)-methylguanosine(46) in tRNA + S-adenosyl-L-homocysteine. It participates in tRNA modification; N(7)-methylguanine-tRNA biosynthesis. Its function is as follows. Catalyzes the formation of N(7)-methylguanine at position 46 (m7G46) in tRNA. This chain is tRNA (guanine-N(7)-)-methyltransferase, found in Burkholderia vietnamiensis (strain G4 / LMG 22486) (Burkholderia cepacia (strain R1808)).